Consider the following 281-residue polypeptide: NADPH-dependent 7-cyano-7-deazaguanine reductase (281 aa).

88–90 (IES) contributes to the substrate binding site. Residue 90 to 91 (SK) coordinates NADPH. The active-site Thioimide intermediate is the cysteine 189. Residue aspartate 196 is the Proton donor of the active site. 228-229 (HE) contacts substrate. 257-258 (RG) contributes to the NADPH binding site.

The protein belongs to the GTP cyclohydrolase I family. QueF type 2 subfamily. In terms of assembly, homodimer.

Its subcellular location is the cytoplasm. It catalyses the reaction 7-aminomethyl-7-carbaguanine + 2 NADP(+) = 7-cyano-7-deazaguanine + 2 NADPH + 3 H(+). Its pathway is tRNA modification; tRNA-queuosine biosynthesis. Functionally, catalyzes the NADPH-dependent reduction of 7-cyano-7-deazaguanine (preQ0) to 7-aminomethyl-7-deazaguanine (preQ1). The protein is NADPH-dependent 7-cyano-7-deazaguanine reductase of Yersinia pestis bv. Antiqua (strain Antiqua).